The primary structure comprises 288 residues: Homoserine kinase (288 aa).

Proline 78–serine 88 is a binding site for ATP.

This sequence belongs to the GHMP kinase family. Homoserine kinase subfamily.

The protein resides in the cytoplasm. It catalyses the reaction L-homoserine + ATP = O-phospho-L-homoserine + ADP + H(+). Its pathway is amino-acid biosynthesis; L-threonine biosynthesis; L-threonine from L-aspartate: step 4/5. Functionally, catalyzes the ATP-dependent phosphorylation of L-homoserine to L-homoserine phosphate. The chain is Homoserine kinase from Streptococcus mutans serotype c (strain ATCC 700610 / UA159).